The chain runs to 68 residues: MKEKIHPKYNTATNVSCACGNTFTVGSTKDSIKVELCAQCHPFYTGEKRMVDTAGRVEKFRQRYGNKT.

The Zn(2+) site is built by cysteine 17, cysteine 19, cysteine 37, and cysteine 40.

It belongs to the bacterial ribosomal protein bL31 family. Type A subfamily. As to quaternary structure, part of the 50S ribosomal subunit. Zn(2+) is required as a cofactor.

In terms of biological role, binds the 23S rRNA. This is Large ribosomal subunit protein bL31 from Dehalococcoides mccartyi (strain ATCC BAA-2266 / KCTC 15142 / 195) (Dehalococcoides ethenogenes (strain 195)).